A 219-amino-acid polypeptide reads, in one-letter code: Small ribosomal subunit protein uS5 (219 aa).

Polar residues predominate over residues 1–21 (MTDQNQKANQGNGLQTTNLQA). Residues 1 to 61 (MTDQNQKANQ…NQNRRFQKPA (61 aa)) are disordered. Residues 35-47 (GIKKAVSKKEGGG) are compositionally biased toward basic and acidic residues. An S5 DRBM domain is found at 66–129 (FEERIVKLKR…KAAHNSLHTI (64 aa)).

This sequence belongs to the universal ribosomal protein uS5 family. Part of the 30S ribosomal subunit. Contacts proteins S4 and S8.

In terms of biological role, with S4 and S12 plays an important role in translational accuracy. Functionally, located at the back of the 30S subunit body where it stabilizes the conformation of the head with respect to the body. This Mycoplasma pneumoniae (strain ATCC 29342 / M129 / Subtype 1) (Mycoplasmoides pneumoniae) protein is Small ribosomal subunit protein uS5.